The sequence spans 398 residues: ORC1-type DNA replication protein 1 (398 aa).

Residues threonine 67–alanine 71, tyrosine 208, and arginine 220 each bind ATP.

This sequence belongs to the CDC6/cdc18 family.

Its function is as follows. Involved in regulation of DNA replication. This is ORC1-type DNA replication protein 1 (cdc6-1) from Sulfurisphaera tokodaii (strain DSM 16993 / JCM 10545 / NBRC 100140 / 7) (Sulfolobus tokodaii).